We begin with the raw amino-acid sequence, 246 residues long: MTTVKTSPTTLPLHPLIHQLAEVIISHWQDYLDLSPYELPDGLGYVEGKLEGEKLVIENRCYQSPQFRKMHLELAKVGQGLDILHCVMFPNPDYALPMFGCDIVAGKGGVSAAIADLSPANPELTLSNSYNQALSQLETPNFSDQRELPEWGDIFSEYCLFIRPHTPEEEKLFLKRVGDFLKVHCQQANQSQPGSTQQREFNIQGQEYYCRKQQQNDKTRRVLEKAFGEAWANKYMTQVLFDIPNH.

The protein belongs to the HY2 family.

The catalysed reaction is (2R,3Z)-phycocyanobilin + 4 oxidized [2Fe-2S]-[ferredoxin] = biliverdin IXalpha + 4 reduced [2Fe-2S]-[ferredoxin] + 4 H(+). Catalyzes the four-electron reduction of biliverdin IX-alpha (2-electron reduction at both the A and D rings); the reaction proceeds via an isolatable 2-electron intermediate, 181,182-dihydrobiliverdin. The sequence is that of Phycocyanobilin:ferredoxin oxidoreductase from Crocosphaera subtropica (strain ATCC 51142 / BH68) (Cyanothece sp. (strain ATCC 51142)).